The primary structure comprises 291 residues: Transmembrane protein 41B (291 aa).

A disordered region spans residues 1 to 39; it reads MAKGRVAERSQLGAHHTTPVGDGAAGTRGLAAPGSRDHQ. Position 18 is a phosphothreonine (Thr18). A Phosphoserine modification is found at Ser35. Helical transmembrane passes span 52 to 72, 109 to 129, 147 to 169, 197 to 217, 225 to 245, and 262 to 282; these read MSLL…FLVY, FYVQ…TFAI, LALF…LSYL, LINY…FINI, PLKV…FVAI, and SWNS…PAIF. The VTT domain; required for its function in autophagy stretch occupies residues 140-251; sequence GFLYPFPLAL…FVAIKAGTTL (112 aa).

Belongs to the TMEM41 family. As to quaternary structure, interacts with VMP1. Interacts with COPA, COPB1, VDAC1 and ERLIN2. Interacts with ATG2A. Interacts with SURF4. (Microbial infection) Interacts with Zika virus NS4A protein and Yellow fever virus NS4B protein.

Its subcellular location is the endoplasmic reticulum membrane. The protein localises to the endomembrane system. The protein resides in the cytoplasm. It catalyses the reaction a 1,2-diacyl-sn-glycero-3-phospho-L-serine(in) = a 1,2-diacyl-sn-glycero-3-phospho-L-serine(out). The enzyme catalyses cholesterol(in) = cholesterol(out). It carries out the reaction a 1,2-diacyl-sn-glycero-3-phosphocholine(in) = a 1,2-diacyl-sn-glycero-3-phosphocholine(out). The catalysed reaction is a 1,2-diacyl-sn-glycero-3-phosphoethanolamine(in) = a 1,2-diacyl-sn-glycero-3-phosphoethanolamine(out). Functionally, phospholipid scramblase involved in lipid homeostasis and membrane dynamics processes. Has phospholipid scramblase activity toward cholesterol and phosphatidylserine, as well as phosphatidylethanolamine and phosphatidylcholine. Required for autophagosome formation: participates in early stages of autophagosome biogenesis at the endoplasmic reticulum (ER) membrane by reequilibrating the leaflets of the ER as lipids are extracted by ATG2 (ATG2A or ATG2B) to mediate autophagosome assembly. In addition to autophagy, involved in other processes in which phospholipid scramblase activity is required. Required for normal motor neuron development. Its function is as follows. (Microbial infection) Critical host factor required for infection by human coronaviruses SARS-CoV-2, HCoV-OC43, HCoV-NL63, and HCoV-229E, as well as all flaviviruses tested such as Zika virus and Yellow fever virus. Required post-entry of the virus to facilitate the ER membrane remodeling necessary to form replication organelles. This chain is Transmembrane protein 41B, found in Homo sapiens (Human).